The primary structure comprises 103 residues: High-potential iron-sulfur protein (103 aa).

Residues 1–28 (MSNRRLFLKSIPIMAAAGAVGMAGLARA) form the signal peptide. The [4Fe-4S] cluster site is built by Cys-66, Cys-69, Cys-82, and Cys-96.

The protein belongs to the high-potential iron-sulfur protein (HiPIP) family. Homodimer.

Its subcellular location is the periplasm. Its function is as follows. Specific class of high-redox-potential 4Fe-4S ferredoxins. Functions in anaerobic electron transport in most purple and in some other photosynthetic bacteria and in at least one genus (Paracoccus) of halophilic, denitrifying bacteria. The chain is High-potential iron-sulfur protein (hip) from Ralstonia nicotianae (strain ATCC BAA-1114 / GMI1000) (Ralstonia solanacearum).